The primary structure comprises 147 residues: uncharacterized protein (147 aa).

It to M.pneumoniae MPN_465.

This is an uncharacterized protein from Mycoplasma pneumoniae (strain ATCC 29342 / M129 / Subtype 1) (Mycoplasmoides pneumoniae).